A 25-amino-acid polypeptide reads, in one-letter code: Caerin 2.1 (25 aa).

Expressed by the skin dorsal glands.

The protein resides in the secreted. Antibacterial peptide with narrow spectrum of activity. Active against the Gram-negative bacterium P.multocida (MIC=25 ug/ml). Inhibits the formation of NO by neuronal nitric oxide synthase with an IC(50) of 9 ug/ml. The protein is Caerin 2.1 of Litoria peronii (Emerald spotted tree frog).